A 462-amino-acid polypeptide reads, in one-letter code: Bifunctional dihydrofolate reductase-thymidylate synthase (462 aa).

Positions threonine 6 to asparagine 165 constitute a DHFR domain. Valine 10 provides a ligand contact to substrate. Residues alanine 12 and glycine 18 to arginine 24 each bind NADP(+). A substrate-binding site is contributed by aspartate 32. NADP(+) contacts are provided by residues arginine 49–threonine 51 and isoleucine 68–asparagine 71. Isoleucine 101 is a substrate binding site. NADP(+) is bound at residue glycine 102–glutamate 109. Threonine 122 contributes to the substrate binding site. Positions glutamate 180–valine 462 are thymidylate synthase. Arginine 200 is a binding site for dUMP. Residue cysteine 345 is part of the active site. DUMP-binding positions include histidine 346, glutamine 364 to aspartate 368, asparagine 376, and histidine 406 to tyrosine 408.

The protein in the N-terminal section; belongs to the dihydrofolate reductase family. This sequence in the C-terminal section; belongs to the thymidylate synthase family.

The enzyme catalyses (6S)-5,6,7,8-tetrahydrofolate + NADP(+) = 7,8-dihydrofolate + NADPH + H(+). It catalyses the reaction dUMP + (6R)-5,10-methylene-5,6,7,8-tetrahydrofolate = 7,8-dihydrofolate + dTMP. Its pathway is cofactor biosynthesis; tetrahydrofolate biosynthesis; 5,6,7,8-tetrahydrofolate from 7,8-dihydrofolate: step 1/1. Bifunctional enzyme. Involved in de novo dTMP biosynthesis. Key enzyme in folate metabolism. Catalyzes an essential reaction for de novo glycine and purine synthesis, DNA precursor synthesis, and for the conversion of dUMP to dTMP. The polypeptide is Bifunctional dihydrofolate reductase-thymidylate synthase (Paramecium tetraurelia).